A 186-amino-acid chain; its full sequence is RIO-type serine/threonine-protein kinase Rio1 (186 aa).

An ATP-binding site is contributed by Lys15. The Proton acceptor role is filled by Asp124. The Mg(2+) site is built by Asn129 and Asp140. Catalysis depends on Asp140, which acts as the 4-aspartylphosphate intermediate.

The protein belongs to the protein kinase superfamily. RIO-type Ser/Thr kinase family.

The enzyme catalyses L-seryl-[protein] + ATP = O-phospho-L-seryl-[protein] + ADP + H(+). The catalysed reaction is L-threonyl-[protein] + ATP = O-phospho-L-threonyl-[protein] + ADP + H(+). It catalyses the reaction ATP + H2O = ADP + phosphate + H(+). In terms of biological role, despite the protein kinase domain is proposed to act predominantly as an ATPase. The polypeptide is RIO-type serine/threonine-protein kinase Rio1 (rio1) (Thermoplasma acidophilum (strain ATCC 25905 / DSM 1728 / JCM 9062 / NBRC 15155 / AMRC-C165)).